Reading from the N-terminus, the 317-residue chain is Lipoyl synthase (317 aa).

[4Fe-4S] cluster contacts are provided by Cys56, Cys61, Cys67, Cys82, Cys86, Cys89, and Ser298. The Radical SAM core domain maps to 68 to 287 (WEDREATFLI…KEEAEQIGFS (220 aa)).

The protein belongs to the radical SAM superfamily. Lipoyl synthase family. It depends on [4Fe-4S] cluster as a cofactor.

The protein localises to the cytoplasm. It carries out the reaction [[Fe-S] cluster scaffold protein carrying a second [4Fe-4S](2+) cluster] + N(6)-octanoyl-L-lysyl-[protein] + 2 oxidized [2Fe-2S]-[ferredoxin] + 2 S-adenosyl-L-methionine + 4 H(+) = [[Fe-S] cluster scaffold protein] + N(6)-[(R)-dihydrolipoyl]-L-lysyl-[protein] + 4 Fe(3+) + 2 hydrogen sulfide + 2 5'-deoxyadenosine + 2 L-methionine + 2 reduced [2Fe-2S]-[ferredoxin]. Its pathway is protein modification; protein lipoylation via endogenous pathway; protein N(6)-(lipoyl)lysine from octanoyl-[acyl-carrier-protein]: step 2/2. Functionally, catalyzes the radical-mediated insertion of two sulfur atoms into the C-6 and C-8 positions of the octanoyl moiety bound to the lipoyl domains of lipoate-dependent enzymes, thereby converting the octanoylated domains into lipoylated derivatives. The sequence is that of Lipoyl synthase from Streptomyces coelicolor (strain ATCC BAA-471 / A3(2) / M145).